A 217-amino-acid polypeptide reads, in one-letter code: Probable GTP-binding protein EngB (217 aa).

An EngB-type G domain is found at 37–214 (AGIEVAFAGR…RAAMIRLLDE (178 aa)). Residues 45–52 (GRSNVGKS), 72–76 (GRTQE), 92–95 (DMPG), 159–162 (TKAD), and 193–195 (TSS) each bind GTP. Residues serine 52 and threonine 74 each contribute to the Mg(2+) site.

This sequence belongs to the TRAFAC class TrmE-Era-EngA-EngB-Septin-like GTPase superfamily. EngB GTPase family. The cofactor is Mg(2+).

Functionally, necessary for normal cell division and for the maintenance of normal septation. The sequence is that of Probable GTP-binding protein EngB from Rhodopseudomonas palustris (strain BisB5).